A 130-amino-acid chain; its full sequence is Small ribosomal subunit protein bS6 (130 aa).

The tract at residues 100–130 (SPMVKAKDERRERREDFAEAGDDVEAGDSEE) is disordered. Over residues 104-116 (KAKDERRERREDF) the composition is skewed to basic and acidic residues. A compositionally biased stretch (acidic residues) spans 117 to 130 (AEAGDDVEAGDSEE).

The protein belongs to the bacterial ribosomal protein bS6 family.

Binds together with bS18 to 16S ribosomal RNA. This chain is Small ribosomal subunit protein bS6, found in Pectobacterium atrosepticum (strain SCRI 1043 / ATCC BAA-672) (Erwinia carotovora subsp. atroseptica).